Here is a 529-residue protein sequence, read N- to C-terminus: Neuronal acetylcholine receptor subunit alpha-2 (529 aa).

Residues 1–26 (MGPSCPVFLSFTKLSLWWLLLTPAGG) form the signal peptide. The tract at residues 27–56 (EEAKRPPPRAPGDPLSSPSPTALPQGGSHT) is disordered. Over 27–264 (EEAKRPPPRA…VTYAFIIRRL (238 aa)) the chain is Extracellular. Asparagine 79 and asparagine 129 each carry an N-linked (GlcNAc...) asparagine glycan. Cysteines 183 and 197 form a disulfide. Asparagine 235 carries N-linked (GlcNAc...) asparagine glycosylation. Cysteine 247 and cysteine 248 form a disulfide bridge. 3 helical membrane passes run 265–289 (PLFY…VFYL), 297–315 (ITLC…LLIT), and 331–352 (YLLF…VLNV). Residues 353-502 (HHRSPSTHTM…WKYVAMVIDR (150 aa)) are Cytoplasmic-facing. The helical transmembrane segment at 503 to 521 (IFLWLFIIVCFLGTIGLFL) threads the bilayer.

The protein belongs to the ligand-gated ion channel (TC 1.A.9) family. Acetylcholine receptor (TC 1.A.9.1) subfamily. Alpha-2/CHRNA2 sub-subfamily. In terms of assembly, neuronal AChR is composed of two different types of subunits: alpha and non-alpha (beta). CHRNA2/alpha-2 subunit can be combined to CHRNB2/beta-2 or CHRNB4/beta-4 to give rise to functional receptors. Both CHRNA2:CHRNB2 and CHRNA2:CHRNB4 nAChR complexes are heteropentamers with two subtypes: LS (low agonist sensitivity) with a (CHRNA2)3:(CHRNB2/4)2 and HS (high agonist sensitivity) with a (CHRNA2)2:(CHRNB2/4)3 stoichiometries; the subtypes differ in their subunit binding interfaces which are involved in ligand binding.

The protein resides in the synaptic cell membrane. It localises to the cell membrane. The catalysed reaction is Ca(2+)(in) = Ca(2+)(out). It carries out the reaction K(+)(in) = K(+)(out). The enzyme catalyses Na(+)(in) = Na(+)(out). Component of neuronal acetylcholine receptors (nAChRs) that function as pentameric, ligand-gated cation channels with high calcium permeability among other activities. nAChRs are excitatory neurotrasnmitter receptors formed by a collection of nAChR subunits known to mediate synaptic transmission in the nervous system and the neuromuscular junction. Each nAchR subunit confers differential attributes to channel properties, including activation, deactivation and desensitization kinetics, pH sensitivity, cation permeability, and binding to allosteric modulators. CHRNA2 forms heteropentameric neuronal acetylcholine receptors with CHRNB2 and CHRNB4 and plays a role in nicotine dependence. This is Neuronal acetylcholine receptor subunit alpha-2 (CHRNA2) from Pan troglodytes (Chimpanzee).